The chain runs to 380 residues: Apelin receptor (380 aa).

The Extracellular portion of the chain corresponds to 1–30 (MEEGGDFDNYYGADNQSECEYTDWKSSGAL). An N-linked (GlcNAc...) asparagine glycan is attached at asparagine 15. 2 cysteine pairs are disulfide-bonded: cysteine 19-cysteine 281 and cysteine 102-cysteine 181. The chain crosses the membrane as a helical span at residues 31-54 (IPAIYMLVFLLGTTGNGLVLWTVF). At 55–64 (RSSREKRRSA) the chain is on the cytoplasmic side. The chain crosses the membrane as a helical span at residues 65-86 (DIFIASLAVADLTFVVTLPLWA). At 87-99 (TYTYRDYDWPFGT) the chain is on the extracellular side. The chain crosses the membrane as a helical span at residues 100–125 (FSCKLSSYLIFVNMYASVFCLTGLSF). The Cytoplasmic portion of the chain corresponds to 126–146 (DRYLAIVRPVANARLRLRVSG). A helical membrane pass occupies residues 147–164 (AVATAVLWVLAALLAMPV). Residues 165 to 198 (MVFRTTGDLENTTKVQCYMDYSMVATVSSDWAWE) are Extracellular-facing. N-linked (GlcNAc...) asparagine glycosylation is present at asparagine 175. Residues 199–223 (VGLGVSSTTVGFVVPFTIMLTCYFF) traverse the membrane as a helical segment. Residues 224–246 (IAQTIAGHFRKERIEGLRKRRRL) are Cytoplasmic-facing. Residues 247 to 270 (LSIIVVLVVTFALCWMPYHLVKTL) traverse the membrane as a helical segment. Over 271–289 (YMLGSLLHWPCDFDLFLMN) the chain is Extracellular. A helical membrane pass occupies residues 290 to 312 (VFPYCTCISYVNSCLNPFLYAFF). Residues 313 to 380 (DPRFRQACTS…PYSQETLVVD (68 aa)) are Cytoplasmic-facing. Low complexity predominate over residues 342–351 (KSASYSSGHS). The segment at 342–380 (KSASYSSGHSQGPGPNMGKGGEQMHEKSIPYSQETLVVD) is disordered. Positions 371–380 (PYSQETLVVD) are enriched in polar residues.

It belongs to the G-protein coupled receptor 1 family. Homodimer; dimerization inhibits APLNR-mediated G protein and beta-arrestin signaling pathways compared to monomeric APLNR.

It is found in the cell membrane. In terms of biological role, g protein-coupled receptor for peptide hormones apelin (APLN) and apelin receptor early endogenous ligand (APELA/ELA), that plays a role in the regulation of normal cardiovascular function and fluid homeostasis. When acting as apelin receptor, activates both G(i) protein pathway that inhibits adenylate cyclase activity, and the beta-arrestin pathway that promotes internalization of the receptor. APLNR/APJ also functions as mechanoreceptor that is activated by pathological stimuli in a G-protein-independent fashion to induce beta-arrestin signaling, hence eliciting cardiac hypertrophy. However, the presence of apelin ligand blunts cardiac hypertrophic induction from APLNR/APJ on response to pathological stimuli. Plays a key role in early development such as gastrulation, blood vessels formation and heart morphogenesis by acting as a APELA receptor. May promote angioblast migration toward the embryonic midline, i.e. the position of the future vessel formation, during vasculogenesis. Promotes sinus venosus (SV)-derived endothelial cells migration into the developing heart to promote coronary blood vessel development. Also plays a role in various processes in adults such as regulation of blood vessel formation, blood pressure, heart contractility and heart failure. Its function is as follows. (Microbial infection) Alternative coreceptor with CD4 for HIV-1 infection; may be involved in the development of AIDS dementia. The sequence is that of Apelin receptor (APLNR) from Macaca mulatta (Rhesus macaque).